The chain runs to 345 residues: Phosphoribosylformylglycinamidine cyclo-ligase (345 aa).

Belongs to the AIR synthase family.

Its subcellular location is the cytoplasm. The catalysed reaction is 2-formamido-N(1)-(5-O-phospho-beta-D-ribosyl)acetamidine + ATP = 5-amino-1-(5-phospho-beta-D-ribosyl)imidazole + ADP + phosphate + H(+). Its pathway is purine metabolism; IMP biosynthesis via de novo pathway; 5-amino-1-(5-phospho-D-ribosyl)imidazole from N(2)-formyl-N(1)-(5-phospho-D-ribosyl)glycinamide: step 2/2. This Staphylococcus carnosus (strain TM300) protein is Phosphoribosylformylglycinamidine cyclo-ligase.